The following is a 57-amino-acid chain: Insulin (57 aa).

Intrachain disulfides connect cysteine 12–cysteine 43, cysteine 24–cysteine 56, and cysteine 42–cysteine 47.

The protein belongs to the insulin family. In terms of assembly, heterodimer of a B chain and an A chain linked by two disulfide bonds.

It is found in the secreted. Its function is as follows. Insulin decreases blood glucose concentration. It increases cell permeability to monosaccharides, amino acids and fatty acids. It accelerates glycolysis, the pentose phosphate cycle, and glycogen synthesis in liver. This chain is Insulin (ins), found in Lampetra fluviatilis (European river lamprey).